The chain runs to 483 residues: uncharacterized protein (483 aa).

The WD repeat unit spans residues 96-137 (IQCDQDPLSSISWSPSGELLLWSSFDSKITVWSLNTQKGYLL).

This is an uncharacterized protein from Schizosaccharomyces pombe (strain 972 / ATCC 24843) (Fission yeast).